A 174-amino-acid chain; its full sequence is Fimbria A protein (174 aa).

An N-terminal signal peptide occupies residues Met1–Ala22. Cys41 and Cys80 are joined by a disulfide.

Belongs to the fimbrial protein family.

Its subcellular location is the fimbrium. Its function is as follows. Major structural component of mannose-resistant fimbriae of Serratia marcescens. This Serratia marcescens protein is Fimbria A protein (smfA).